A 207-amino-acid polypeptide reads, in one-letter code: Probable RNA 2'-phosphotransferase (207 aa).

It belongs to the KptA/TPT1 family.

In terms of biological role, removes the 2'-phosphate from RNA via an intermediate in which the phosphate is ADP-ribosylated by NAD followed by a presumed transesterification to release the RNA and generate ADP-ribose 1''-2''-cyclic phosphate (APPR&gt;P). May function as an ADP-ribosylase. This chain is Probable RNA 2'-phosphotransferase, found in Methanosarcina barkeri (strain Fusaro / DSM 804).